The sequence spans 448 residues: Adenylosuccinate synthetase 1 (448 aa).

GTP-binding positions include 22–28 and 50–52; these read GDEGKGK and GHT. Aspartate 23 functions as the Proton acceptor in the catalytic mechanism. Aspartate 23 and glycine 50 together coordinate Mg(2+). Residues 23–26, 48–51, threonine 139, arginine 153, glutamine 234, threonine 249, and arginine 321 each bind IMP; these read DEGK and NAGH. The active-site Proton donor is histidine 51. A substrate-binding site is contributed by 317–323; that stretch reads SVTGRPR. GTP contacts are provided by residues arginine 323, 349-351, and 431-433; these read KLD and STG.

It belongs to the adenylosuccinate synthetase family. Homodimer. Mg(2+) is required as a cofactor.

The protein localises to the cytoplasm. It carries out the reaction IMP + L-aspartate + GTP = N(6)-(1,2-dicarboxyethyl)-AMP + GDP + phosphate + 2 H(+). Its pathway is purine metabolism; AMP biosynthesis via de novo pathway; AMP from IMP: step 1/2. Functionally, plays an important role in the de novo pathway of purine nucleotide biosynthesis. Catalyzes the first committed step in the biosynthesis of AMP from IMP. In Burkholderia lata (strain ATCC 17760 / DSM 23089 / LMG 22485 / NCIMB 9086 / R18194 / 383), this protein is Adenylosuccinate synthetase 1.